Consider the following 464-residue polypeptide: Meiotic plaque component protein 54 (464 aa).

The segment at Ser71–Leu102 is disordered. 3 coiled-coil regions span residues Glu99–Cys119, Lys156–Leu193, and Ser231–Gln365.

In terms of assembly, interacts directly with SPO21/MPC70, NUD1, SPO74 and SPC42. Probable component of a spindle pole body (SPB) complex composed of ADY3, SSP1, DON1, MPC54, SPO21/MPC70, NUD1 and CNM67.

The protein resides in the prospore membrane. It localises to the cytoplasm. The protein localises to the cytoskeleton. Its subcellular location is the microtubule organizing center. It is found in the spindle pole body. The protein resides in the spindle pole. Involved in the pathway that organizes the shaping and sizing of the prospore membrane (PSM) during sporulation. This chain is Meiotic plaque component protein 54 (MPC54), found in Saccharomyces cerevisiae (strain ATCC 204508 / S288c) (Baker's yeast).